Here is a 521-residue protein sequence, read N- to C-terminus: Cyclic AMP-responsive element-binding protein 3-like protein 2 (521 aa).

Residues 1 to 378 lie on the Cytoplasmic side of the membrane; it reads MEVLESGEQS…CKLAGTQTGT (378 aa). Residue Ser93 is modified to Phosphoserine. Residue Lys178 forms a Glycyl lysine isopeptide (Lys-Gly) (interchain with G-Cter in SUMO2) linkage. Phosphoserine is present on Ser191. Residues 196 to 264 are disordered; the sequence is SVDQLHLPPT…PHKLQGSGPL (69 aa). Positions 208-220 are enriched in low complexity; that stretch reads SSHSSDSEGSLSP. Positions 294-357 constitute a bZIP domain; that stretch reads ALKKIRRKIK…RTLLQQLQKL (64 aa). Positions 296 to 325 are basic motif; it reads KKIRRKIKNKISAQESRRKKKEYMDSLEKK. The tract at residues 336-357 is leucine-zipper; that stretch reads LRKKVEVLENTNRTLLQQLQKL. The helical; Signal-anchor for type II membrane protein transmembrane segment at 379–399 threads the bilayer; the sequence is CLMVVVLCFAVAFGSLFQGYG. Over 400-521 the chain is Lumenal; that stretch reads LYPSATKMAL…ELERRVNATF (122 aa). The S1P recognition signature appears at 427–430; it reads RNLL. N-linked (GlcNAc...) asparagine glycosylation is found at Asn505 and Asn518.

It belongs to the bZIP family. ATF subfamily. As to quaternary structure, binds DNA as a dimer. Upon ER stress, translocated to the Golgi apparatus, where it is processed by regulated intramembrane proteolysis (RIP) to release the cytosol-facing N-terminal transcription factor domain. The cleavage is performed sequentially by site-1 and site-2 proteases (S1P/MBTPS1 and S2P/MBTPS2). In terms of processing, N-glycosylated. Post-translationally, ubiquitinated by HRD1/SYVN1; undergoes 'Lys-48'-linked ubiquitination, followed by rapid proteasomal degradation under normal conditions. Upon ER stress, SYVN1 E3 ubiquitin-protein ligase dissociates from its substrate, ubiquitination does not occur and CREB3L2 is stabilized.

The protein localises to the endoplasmic reticulum membrane. It localises to the nucleus. Its function is as follows. Transcription factor involved in unfolded protein response (UPR). In the absence of endoplasmic reticulum (ER) stress, inserted into ER membranes, with N-terminal DNA-binding and transcription activation domains oriented toward the cytosolic face of the membrane. In response to ER stress, transported to the Golgi, where it is cleaved in a site-specific manner by resident proteases S1P/MBTPS1 and S2P/MBTPS2. The released N-terminal cytosolic domain is translocated to the nucleus to effect transcription of specific target genes. Plays a critical role in chondrogenesis by activating the transcription of SEC23A, which promotes the transport and secretion of cartilage matrix proteins, and possibly that of ER biogenesis-related genes. In a neuroblastoma cell line, protects cells from ER stress-induced death. In vitro activates transcription of target genes via direct binding to the CRE site. The protein is Cyclic AMP-responsive element-binding protein 3-like protein 2 (Creb3l2) of Rattus norvegicus (Rat).